We begin with the raw amino-acid sequence, 124 residues long: UPF0102 protein HCH_05895 (124 aa).

This sequence belongs to the UPF0102 family.

The protein is UPF0102 protein HCH_05895 of Hahella chejuensis (strain KCTC 2396).